Reading from the N-terminus, the 378-residue chain is Forkhead box protein I1 (378 aa).

2 disordered regions span residues 1–26 (MSSF…QEPP) and 208–278 (DNGN…APCL). The fork-head DNA-binding region spans 123–217 (RPPYSYSALI…DNGNFRRKRK (95 aa)). A compositionally biased stretch (polar residues) spans 236–248 (SSLPVDSPKTTEP).

Expressed in kidney.

The protein localises to the nucleus. Functionally, transcriptional activator required for the development of normal hearing, sense of balance and kidney function. Required for the expression of SLC26A4/PDS, JAG1 and COCH in a subset of epithelial cells and the development of the endolymphatic system in the inner ear. Also required for the expression of SLC4A1/AE1, SLC4A9/AE4, ATP6V1B1 and the differentiation of intercalated cells in the epithelium of distal renal tubules. The sequence is that of Forkhead box protein I1 (FOXI1) from Homo sapiens (Human).